We begin with the raw amino-acid sequence, 161 residues long: uncharacterized protein (161 aa).

The first 27 residues, 1-27 (MKKIGLLFMLCLAALFTIGFPAQQADA), serve as a signal peptide directing secretion.

Its subcellular location is the secreted. This is an uncharacterized protein from Bacillus subtilis (strain 168).